A 214-amino-acid polypeptide reads, in one-letter code: Neurogenin-3 (214 aa).

A compositionally biased stretch (polar residues) spans 1–14 (MTPQPSGAPTVQVT). The tract at residues 1–98 (MTPQPSGAPT…NDRERNRMHN (98 aa)) is disordered. A compositionally biased stretch (basic and acidic residues) spans 15–26 (RETERSFPRASE). 2 stretches are compositionally biased toward basic residues: residues 57-70 (APRKLRARRGGRSR) and 79-88 (KQRRSRRKKA). A bHLH domain is found at 83–135 (SRRKKANDRERNRMHNLNSALDALRGVLPTFPDDAKLTKIETLRFAHNYIWAL).

As to quaternary structure, efficient DNA binding requires dimerization with another bHLH protein. Interacts with ATOH8.

The protein localises to the nucleus. Functionally, acts as a transcriptional regulator. Together with NKX2-2, initiates transcriptional activation of NEUROD1. Involved in neurogenesis. Also required for the specification of a common precursor of the 4 pancreatic endocrine cell types. The sequence is that of Neurogenin-3 (NEUROG3) from Homo sapiens (Human).